Here is a 75-residue protein sequence, read N- to C-terminus: UPF0352 protein CKO_00587 (75 aa).

It belongs to the UPF0352 family.

This chain is UPF0352 protein CKO_00587, found in Citrobacter koseri (strain ATCC BAA-895 / CDC 4225-83 / SGSC4696).